The sequence spans 137 residues: Large ribosomal subunit protein uL16 (137 aa).

Belongs to the universal ribosomal protein uL16 family. Part of the 50S ribosomal subunit.

In terms of biological role, binds 23S rRNA and is also seen to make contacts with the A and possibly P site tRNAs. The protein is Large ribosomal subunit protein uL16 of Chelativorans sp. (strain BNC1).